The sequence spans 435 residues: Casein kinase 1-like protein 12 (435 aa).

Residues 9 to 278 (YRLGRKIGSG…LKRIFRDLFI (270 aa)) form the Protein kinase domain. Residues 15-23 (IGSGSFGEI) and Lys38 contribute to the ATP site. The active-site Proton acceptor is the Asp128. 2 disordered regions span residues 313-363 (VGTS…RGPM) and 394-414 (LRNS…TRKH).

The protein belongs to the protein kinase superfamily. CK1 Ser/Thr protein kinase family. Casein kinase I subfamily. As to quaternary structure, monomer. Post-translationally, autophosphorylated.

The protein localises to the cytoplasm. The enzyme catalyses L-seryl-[protein] + ATP = O-phospho-L-seryl-[protein] + ADP + H(+). It catalyses the reaction L-threonyl-[protein] + ATP = O-phospho-L-threonyl-[protein] + ADP + H(+). Its function is as follows. Casein kinases are operationally defined by their preferential utilization of acidic proteins such as caseins as substrates. It can phosphorylate a large number of proteins. The polypeptide is Casein kinase 1-like protein 12 (Arabidopsis thaliana (Mouse-ear cress)).